Reading from the N-terminus, the 479-residue chain is Deoxyribodipyrimidine photo-lyase (479 aa).

The Photolyase/cryptochrome alpha/beta domain maps to 6 to 132 (APVIVWFRKD…TVRSFSGQLL (127 aa)). Tyrosine 226 is a binding site for FAD. Arginine 230 is a binding site for DNA. FAD-binding positions include 238–242 (TSLLS) and 277–284 (EIVWREFC). Interaction with DNA stretches follow at residues 277-284 (EIVWREFC) and 343-344 (NR). Residue 374–376 (DAD) participates in FAD binding. Glutamine 406 is a DNA binding site.

The protein belongs to the DNA photolyase class-3 family. Requires FAD as cofactor. (6R)-5,10-methylene-5,6,7,8-tetrahydrofolate serves as cofactor.

The enzyme catalyses cyclobutadipyrimidine (in DNA) = 2 pyrimidine residues (in DNA).. Functionally, photolyase involved in the repair of UV radiation-induced DNA damage. By using blue-light energy, catalyzes the photoreactivation of cyclobutane pyrimidine dimers (CPDs), which are formed between adjacent bases on the same DNA strand upon exposure to ultraviolet radiation. Can repair CPD lesions in ssDNA as well as in dsDNA. The polypeptide is Deoxyribodipyrimidine photo-lyase (Agrobacterium fabrum (strain C58 / ATCC 33970) (Agrobacterium tumefaciens (strain C58))).